The sequence spans 1527 residues: DNA (cytosine-5)-methyltransferase 1A (1527 aa).

Disordered stretches follow at residues 1–62 and 661–718; these read MAKS…PKRA and GDTK…KEIK. Composition is skewed to acidic residues over residues 25 to 36 and 664 to 692; these read EPVENENLESEF and KEED…EVNV. Residues 709–718 are compositionally biased toward basic and acidic residues; sequence SSADTRKEIK. 2 consecutive BAH domains span residues 742–874 and 910–1049; these read LSIS…FSLP and ITYN…KQLP. An SAM-dependent MTase C5-type domain is found at 1092–1526; the sequence is LATLDIFAGC…RKLKQAIDAK (435 aa). The active site involves cysteine 1197.

It belongs to the class I-like SAM-binding methyltransferase superfamily. C5-methyltransferase family. Expressed in roots and inflorescences. Expressed in roots, panicles, anthers, pistils, endosperm and imbibed embryos. Expressed in tissues containing actively replicating and dividing cells, such as shoot and root meristems.

The protein resides in the nucleus. It carries out the reaction a 2'-deoxycytidine in DNA + S-adenosyl-L-methionine = a 5-methyl-2'-deoxycytidine in DNA + S-adenosyl-L-homocysteine + H(+). Functionally, probably methylates CpG residues and maintains DNA methylation. May be involved in methylation-dependent gene silencing. May play a minor role in the maintenance of DNA methylation. This chain is DNA (cytosine-5)-methyltransferase 1A, found in Oryza sativa subsp. japonica (Rice).